Here is a 262-residue protein sequence, read N- to C-terminus: Ribosome-recycling factor, mitochondrial (262 aa).

A mitochondrion-targeting transit peptide spans 1 to 55 (MASGIRCFRLLHPAFRSYHAALTRPVSEVSMKTVSGRQHGHRQYSAYPAVPVRHF).

Belongs to the RRF family.

The protein resides in the mitochondrion. Its function is as follows. Responsible for the disassembly of ribosomes from messenger RNA at the termination of mitochondrial protein biosynthesis. Acts in collaboration with GFM2. Promotes mitochondrial ribosome recycling by dissolution of intersubunit contacts. This chain is Ribosome-recycling factor, mitochondrial (Mrrf), found in Mus musculus (Mouse).